Reading from the N-terminus, the 195-residue chain is HTH-type transcriptional regulator BetI (195 aa).

Positions 8 to 68 constitute an HTH tetR-type domain; the sequence is SIRRRQLIDA…ATMRDITSQL (61 aa). The segment at residues 31-50 is a DNA-binding region (H-T-H motif); it reads TIAQIARRAGVSTGIISHYF.

Its pathway is amine and polyamine biosynthesis; betaine biosynthesis via choline pathway [regulation]. Repressor involved in the biosynthesis of the osmoprotectant glycine betaine. It represses transcription of the choline transporter BetT and the genes of BetAB involved in the synthesis of glycine betaine. This is HTH-type transcriptional regulator BetI from Escherichia coli O8 (strain IAI1).